We begin with the raw amino-acid sequence, 24 residues long: Poly-His-poly-Gly peptide 1 (24 aa).

Basic residues predominate over residues 1–13 (EDDHHHHHHHHHG). Residues 1-24 (EDDHHHHHHHHHGVGGGGGGGGGG) are disordered. The segment covering 14–24 (VGGGGGGGGGG) has biased composition (gly residues).

In terms of tissue distribution, expressed by the venom gland.

The protein localises to the secreted. Functionally, may serve as a metalloproteinase inhibitor during glandular storage. Their inhibition may be instantly disengaged, by dilution or physiochemical change, when venom is injected into tissue of the victim. The protein is Poly-His-poly-Gly peptide 1 of Atheris chlorechis (Western bush viper).